A 790-amino-acid chain; its full sequence is Eukaryotic translation initiation factor 3 subunit C (790 aa).

Residues 1-62 form a disordered region; it reads MSRFFVSGYN…DGRPSGPAYF (62 aa). Acidic residues predominate over residues 14–53; the sequence is SSEEEDLLSSEEELLTSSGEENEDSDFFNDDDESSSDEED. The PCI domain maps to 556-728; sequence FHQHINLELL…IVFTTDSQRS (173 aa). The segment at 748-790 is disordered; that stretch reads NEKTSSNGYAKKNQSQTQPQAQSKEVEENKFRYANVNTNTDEF. Residues 751 to 770 are compositionally biased toward polar residues; that stretch reads TSSNGYAKKNQSQTQPQAQS.

Belongs to the eIF-3 subunit C family. As to quaternary structure, component of the eukaryotic translation initiation factor 3 (eIF-3) complex.

Its subcellular location is the cytoplasm. Its function is as follows. Component of the eukaryotic translation initiation factor 3 (eIF-3) complex, which is involved in protein synthesis of a specialized repertoire of mRNAs and, together with other initiation factors, stimulates binding of mRNA and methionyl-tRNAi to the 40S ribosome. The eIF-3 complex specifically targets and initiates translation of a subset of mRNAs involved in cell proliferation. The polypeptide is Eukaryotic translation initiation factor 3 subunit C (Lodderomyces elongisporus (strain ATCC 11503 / CBS 2605 / JCM 1781 / NBRC 1676 / NRRL YB-4239) (Yeast)).